Consider the following 425-residue polypeptide: Serine--tRNA ligase (425 aa).

232 to 234 (TSE) contacts L-serine. ATP is bound by residues 263-265 (RRE) and Val279. Residue Glu286 coordinates L-serine. 350-353 (EVVS) contacts ATP. An L-serine-binding site is contributed by Thr387.

The protein belongs to the class-II aminoacyl-tRNA synthetase family. Type-1 seryl-tRNA synthetase subfamily. As to quaternary structure, homodimer. The tRNA molecule binds across the dimer.

It localises to the cytoplasm. It catalyses the reaction tRNA(Ser) + L-serine + ATP = L-seryl-tRNA(Ser) + AMP + diphosphate + H(+). The catalysed reaction is tRNA(Sec) + L-serine + ATP = L-seryl-tRNA(Sec) + AMP + diphosphate + H(+). Its pathway is aminoacyl-tRNA biosynthesis; selenocysteinyl-tRNA(Sec) biosynthesis; L-seryl-tRNA(Sec) from L-serine and tRNA(Sec): step 1/1. Catalyzes the attachment of serine to tRNA(Ser). Is also able to aminoacylate tRNA(Sec) with serine, to form the misacylated tRNA L-seryl-tRNA(Sec), which will be further converted into selenocysteinyl-tRNA(Sec). The polypeptide is Serine--tRNA ligase (Methanoregula boonei (strain DSM 21154 / JCM 14090 / 6A8)).